The primary structure comprises 452 residues: Transcription factor ETV6 (452 aa).

Lys11 is modified (N6-acetyllysine; alternate). A Glycyl lysine isopeptide (Lys-Gly) (interchain with G-Cter in SUMO2); alternate cross-link involves residue Lys11. Residue Thr18 is modified to Phosphothreonine. Ser22 is subject to Phosphoserine. Positions 40 to 124 constitute a PNT domain; it reads ALRMEEDSIR…ELLQHILKQR (85 aa). The interval 154–262 is disordered; the sequence is EDNGVQRTSR…PRPSSPRQEG (109 aa). Over residues 158 to 174 the composition is skewed to polar residues; the sequence is VQRTSRPSAENVHQNPP. A phosphoserine mark is found at Ser213, Ser238, and Ser257. Lys288 is covalently cross-linked (Glycyl lysine isopeptide (Lys-Gly) (interchain with G-Cter in SUMO2)). An N6-acetyllysine; alternate modification is found at Lys302. Lys302 participates in a covalent cross-link: Glycyl lysine isopeptide (Lys-Gly) (interchain with G-Cter in SUMO2); alternate. Ser323 bears the Phosphoserine mark. Residues 339–420 constitute a DNA-binding region (ETS); it reads RLLWDYVYQL…PGQRLLFRFM (82 aa). Glycyl lysine isopeptide (Lys-Gly) (interchain with G-Cter in SUMO2) cross-links involve residues Lys403 and Lys421.

This sequence belongs to the ETS family. Can form homodimers or heterodimers with TEL2 or FLI1. Interacts with L3MBTL1 and HDAC9.

The protein localises to the nucleus. Functionally, transcriptional repressor; binds to the DNA sequence 5'-CCGGAAGT-3'. Plays a role in hematopoiesis and malignant transformation. The sequence is that of Transcription factor ETV6 (ETV6) from Bos taurus (Bovine).